The sequence spans 1036 residues: KAT8 regulatory NSL complex subunit 1 (1036 aa).

At K104 the chain carries N6-acetyllysine. Disordered regions lie at residues 145-211 (GQTA…CTLP) and 226-257 (NSTANKSSVNSMDQPALQGSSRLSPSTDSSSN). Residues 226–244 (NSTANKSSVNSMDQPALQG) are compositionally biased toward polar residues. Positions 245–256 (SSRLSPSTDSSS) are enriched in low complexity. Phosphoserine is present on S249. K262 is covalently cross-linked (Glycyl lysine isopeptide (Lys-Gly) (interchain with G-Cter in SUMO2)). The residue at position 268 (S268) is a Phosphoserine. Positions 285–312 (TALLRRQADIEIRARRLQKRLQVVQAKQ) form a coiled coil. Residue K331 forms a Glycyl lysine isopeptide (Lys-Gly) (interchain with G-Cter in SUMO2) linkage. 2 disordered regions span residues 399-423 (DSDVTDSSSGGESDIEEEELTRADP) and 739-787 (SPSY…RRRG). A compositionally biased stretch (low complexity) spans 759–772 (STSSDTSTPTSSGS). The segment at 781 to 813 (PVRRRRGESSFDINNIVIPMSVAATTRVEKLQY) is required for activation of KAT8 histone acetyltransferase activity. The region spanning 815–966 (EILTPSWREV…GLDEQSVQPW (152 aa)) is the PEHE domain. Residues 841–859 (EDLSDAAFAALHAKCEEME) form an interaction with KAT8 HAT domain region. Positions 869–931 (VPPQRRGSRS…SPISPELHSA (63 aa)) are disordered. A compositionally biased stretch (polar residues) spans 886 to 896 (TTPQLGSANPS). The span at 906–919 (SSSHSLSEFSHGQS) shows a compositional bias: low complexity. Residues S922 and S925 each carry the phosphoserine modification. T934 carries the post-translational modification Phosphothreonine. Position 976 is a phosphoserine (S976). Positions 989 to 1020 (DTAARCTRRTSGSKTGREAEVAPTSPPVVPLK) are disordered.

In terms of assembly, component of the NSL complex at least composed of MOF/KAT8, KANSL1, KANSL2, KANSL3, MCRS1, PHF20, OGT1/OGT, WDR5 and HCFC1. Interacts (via PEHE domain) with KAT8 (via HAT domain); the interaction is direct. Component of some MLL1/MLL complex, at least composed of the core components KMT2A/MLL1, ASH2L, HCFC1, WDR5 and RBBP5, as well as the facultative components BACC1, CHD8, E2F6, HSP70, INO80C, KANSL1, LAS1L, MAX, MCRS1, MGA, KAT8/MOF, PELP1, PHF20, PRP31, RING2, RUVB1/TIP49A, RUVB2/TIP49B, SENP3, TAF1, TAF4, TAF6, TAF7, TAF9 and TEX10.

The protein localises to the nucleus. The protein resides in the chromosome. It is found in the centromere. Its subcellular location is the kinetochore. It localises to the mitochondrion. The protein localises to the cytoplasm. The protein resides in the cytoskeleton. It is found in the spindle pole. In terms of biological role, non-catalytic component of the NSL histone acetyltransferase complex, a multiprotein complex that mediates histone H4 acetylation at 'Lys-5'- and 'Lys-8' (H4K5ac and H4K8ac) at transcription start sites and promotes transcription initiation. The NSL complex also acts as a regulator of gene expression in mitochondria. In addition to its role in transcription, KANSL1 also plays an essential role in spindle assembly during mitosis. Associates with microtubule ends and contributes to microtubule stability. This is KAT8 regulatory NSL complex subunit 1 (Kansl1) from Mus musculus (Mouse).